The following is a 23-amino-acid chain: Alyteserin-1c (23 aa).

Serine 23 carries the serine amide modification.

In terms of tissue distribution, expressed by the skin glands.

The protein localises to the secreted. Its subcellular location is the target cell membrane. In terms of biological role, antibacterial peptide with amphipathic alpha-helical structure that shows selective growth-inhibitory activity against Gram-negative bacteria but low hemolytic activity against human erythrocytes (LC(50)=145-220 uM). It is moderately active against the Gram-negative bacteria E.coli (MIC=25 uM), K.pneumoniae (MIC=50 uM), P.aeruginosa (MIC=25 uM), A.baumannii (MIC=6 uM), and is weaky active against the Gram-positive S.aureus (MIC=100-250 uM). In Alytes obstetricans (Common midwife toad), this protein is Alyteserin-1c.